The primary structure comprises 271 residues: Transcription factor PU.1 (271 aa).

The disordered stretch occupies residues 124 to 164 (LSPAHQQSSDEEEGERQSPPLEVSDGEADGLEPGPGLLHGE). Ser-141 and Ser-147 each carry phosphoserine. Residues 154-164 (LEPGPGLLHGE) are compositionally biased toward low complexity. Positions 171–254 (IRLYQFLLDL…VKKKLTYQFS (84 aa)) form a DNA-binding region, ETS. DNA contacts are provided by Lys-218, Arg-231, Arg-234, and Lys-244.

Belongs to the ETS family. As to quaternary structure, binds DNA as a monomer. Can form homomers. Directly interacts with CEBPD/NF-IL6-beta; this interaction does not affect DNA-binding properties of each partner. Interacts with NONO/p54(nrb). Interacts with RUNX1/AML1. Interacts with GFI1; the interaction represses SPI1 transcriptional activity, hence blocks SPI1-induced macrophage differentiation of myeloid progenitor cells. Interacts with CEBPE. Interacts with IRF4/Pip and IRF8. Interacts with JUN. Interacts with RB1. Interacts with TBP.

The protein localises to the nucleus. Its activity is regulated as follows. Transcriptional activity at macrophage-specific genes is inhibited by interaction with GFI1, which results in the inhibition of SPI1-induced macrophage differentiation of myeloid progenitor cells, but not that of the granulocyte lineage. Functionally, pioneer transcription factor, which controls hematopoietic cell fate by decompacting stem cell heterochromatin and allowing other transcription factors to enter otherwise inaccessible genomic sites. Once in open chromatin, can directly control gene expression by binding genetic regulatory elements and can also more broadly influence transcription by recruiting transcription factors, such as interferon regulatory factors (IRFs), to otherwise inaccessible genomic regions. Transcriptionally activates genes important for myeloid and lymphoid lineages, such as CSF1R or FCER1A. Transcriptional activation from certain promoters, possibly containing low affinity binding sites, is achieved cooperatively with other transcription factors. FCER1A transactivation is achieved in cooperation with GATA1. May be particularly important for the pro- to pre-B cell transition. Binds (via the ETS domain) onto the purine-rich DNA core sequence 5'-GAGGAA-3', also known as the PU-box. In vitro can bind RNA and interfere with pre-mRNA splicing. The polypeptide is Transcription factor PU.1 (Spi1) (Rattus norvegicus (Rat)).